Here is a 99-residue protein sequence, read N- to C-terminus: Large ribosomal subunit protein bL21 (99 aa).

Belongs to the bacterial ribosomal protein bL21 family. Part of the 50S ribosomal subunit. Contacts protein L20.

This protein binds to 23S rRNA in the presence of protein L20. The chain is Large ribosomal subunit protein bL21 from Anaplasma phagocytophilum (strain HZ).